We begin with the raw amino-acid sequence, 196 residues long: Lipoprotein signal peptidase (196 aa).

Helical transmembrane passes span L43 to F63, A75 to S95, and G100 to F120. Residues D126 and D144 contribute to the active site. Residues Y135–I155 form a helical membrane-spanning segment.

This sequence belongs to the peptidase A8 family.

It is found in the cell inner membrane. The enzyme catalyses Release of signal peptides from bacterial membrane prolipoproteins. Hydrolyzes -Xaa-Yaa-Zaa-|-(S,diacylglyceryl)Cys-, in which Xaa is hydrophobic (preferably Leu), and Yaa (Ala or Ser) and Zaa (Gly or Ala) have small, neutral side chains.. It functions in the pathway protein modification; lipoprotein biosynthesis (signal peptide cleavage). In terms of biological role, this protein specifically catalyzes the removal of signal peptides from prolipoproteins. In Rickettsia canadensis (strain McKiel), this protein is Lipoprotein signal peptidase.